Here is a 179-residue protein sequence, read N- to C-terminus: Replication restart protein DnaT (179 aa).

Positions 156 to 179 are disordered; that stretch reads GGLPKRDVNTVSEPDSQIPPGFRG.

Belongs to the DnaT family. As to quaternary structure, homooligomerizes. Interacts with PriB. Component of the replication restart primosome. Primosome assembly occurs via a 'hand-off' mechanism. PriA binds to replication forks, subsequently PriB then DnaT bind; DnaT then displaces ssDNA to generate the helicase loading substrate.

Its function is as follows. Involved in the restart of stalled replication forks, which reloads the replicative helicase on sites other than the origin of replication. Can function in multiple replication restart pathways. Displaces ssDNA from a PriB-ssDNA complex. Probably forms a spiral filament on ssDNA. The chain is Replication restart protein DnaT from Escherichia coli O7:K1 (strain IAI39 / ExPEC).